We begin with the raw amino-acid sequence, 447 residues long: Asparagine--tRNA ligase (447 aa).

The protein belongs to the class-II aminoacyl-tRNA synthetase family. Homodimer.

The protein localises to the cytoplasm. The catalysed reaction is tRNA(Asn) + L-asparagine + ATP = L-asparaginyl-tRNA(Asn) + AMP + diphosphate + H(+). The polypeptide is Asparagine--tRNA ligase (Streptococcus pneumoniae serotype 4 (strain ATCC BAA-334 / TIGR4)).